Reading from the N-terminus, the 232-residue chain is AA9 family lytic polysaccharide monooxygenase C (232 aa).

An N-terminal signal peptide occupies residues 1–19 (MKAAVSLALLVAVAGAASA). The Cu(2+) site is built by H20 and H91. A disulfide bridge links C61 with C180. The O2 site is built by H166 and Q175. Cu(2+) is bound at residue Y177. N184 carries an N-linked (GlcNAc...) asparagine glycan.

The protein belongs to the polysaccharide monooxygenase AA9 family. Cu(2+) is required as a cofactor.

Its subcellular location is the secreted. The enzyme catalyses [(1-&gt;4)-beta-D-glucosyl]n+m + reduced acceptor + O2 = 4-dehydro-beta-D-glucosyl-[(1-&gt;4)-beta-D-glucosyl]n-1 + [(1-&gt;4)-beta-D-glucosyl]m + acceptor + H2O.. Lytic polysaccharide monooxygenase (LPMO) that depolymerizes crystalline and amorphous polysaccharides via the oxidation of scissile alpha- or beta-(1-4)-glycosidic bonds, yielding C1 or C4 oxidation products. Catalysis by LPMOs requires the reduction of the active-site copper from Cu(II) to Cu(I) by a reducing agent and H(2)O(2) or O(2) as a cosubstrate. In Malbranchea cinnamomea (Thermophilic fungus), this protein is AA9 family lytic polysaccharide monooxygenase C.